We begin with the raw amino-acid sequence, 57 residues long: uncharacterized protein (57 aa).

This is an uncharacterized protein from Escherichia coli (strain K12).